The primary structure comprises 555 residues: Dihydroxy-acid dehydratase (555 aa).

A Mg(2+)-binding site is contributed by Asp78. Position 119 (Cys119) interacts with [2Fe-2S] cluster. 2 residues coordinate Mg(2+): Asp120 and Lys121. Lys121 carries the post-translational modification N6-carboxylysine. Residue Cys192 coordinates [2Fe-2S] cluster. Glu444 is a binding site for Mg(2+). Ser470 (proton acceptor) is an active-site residue.

The protein belongs to the IlvD/Edd family. In terms of assembly, homodimer. Requires [2Fe-2S] cluster as cofactor. It depends on Mg(2+) as a cofactor.

It catalyses the reaction (2R)-2,3-dihydroxy-3-methylbutanoate = 3-methyl-2-oxobutanoate + H2O. The catalysed reaction is (2R,3R)-2,3-dihydroxy-3-methylpentanoate = (S)-3-methyl-2-oxopentanoate + H2O. Its pathway is amino-acid biosynthesis; L-isoleucine biosynthesis; L-isoleucine from 2-oxobutanoate: step 3/4. The protein operates within amino-acid biosynthesis; L-valine biosynthesis; L-valine from pyruvate: step 3/4. Its function is as follows. Functions in the biosynthesis of branched-chain amino acids. Catalyzes the dehydration of (2R,3R)-2,3-dihydroxy-3-methylpentanoate (2,3-dihydroxy-3-methylvalerate) into 2-oxo-3-methylpentanoate (2-oxo-3-methylvalerate) and of (2R)-2,3-dihydroxy-3-methylbutanoate (2,3-dihydroxyisovalerate) into 2-oxo-3-methylbutanoate (2-oxoisovalerate), the penultimate precursor to L-isoleucine and L-valine, respectively. In Halalkalibacterium halodurans (strain ATCC BAA-125 / DSM 18197 / FERM 7344 / JCM 9153 / C-125) (Bacillus halodurans), this protein is Dihydroxy-acid dehydratase.